Reading from the N-terminus, the 480-residue chain is Glycogen synthase 1 (480 aa).

Position 15 (lysine 15) interacts with ADP-alpha-D-glucose.

This sequence belongs to the glycosyltransferase 1 family. Bacterial/plant glycogen synthase subfamily.

The enzyme catalyses [(1-&gt;4)-alpha-D-glucosyl](n) + ADP-alpha-D-glucose = [(1-&gt;4)-alpha-D-glucosyl](n+1) + ADP + H(+). The protein operates within glycan biosynthesis; glycogen biosynthesis. Functionally, synthesizes alpha-1,4-glucan chains using ADP-glucose. The sequence is that of Glycogen synthase 1 (glgA1) from Rhizobium radiobacter (Agrobacterium tumefaciens).